The primary structure comprises 84 residues: Sec-independent protein translocase protein TatA (84 aa).

Residues 1 to 21 (MGGLQPWHWLIVIAVFVLLFG) form a helical membrane-spanning segment. The disordered stretch occupies residues 46 to 84 (MQSDSNAAKSDQPEQITSERVVVDPSTQSTSSNSDKRPA). Positions 48–63 (SDSNAAKSDQPEQITS) are enriched in polar residues.

Belongs to the TatA/E family. In terms of assembly, the Tat system comprises two distinct complexes: a TatABC complex, containing multiple copies of TatA, TatB and TatC subunits, and a separate TatA complex, containing only TatA subunits. Substrates initially bind to the TatABC complex, which probably triggers association of the separate TatA complex to form the active translocon.

It localises to the cell membrane. Functionally, part of the twin-arginine translocation (Tat) system that transports large folded proteins containing a characteristic twin-arginine motif in their signal peptide across membranes. TatA could form the protein-conducting channel of the Tat system. In Mycolicibacterium gilvum (strain PYR-GCK) (Mycobacterium gilvum (strain PYR-GCK)), this protein is Sec-independent protein translocase protein TatA.